Here is a 517-residue protein sequence, read N- to C-terminus: Cytochrome P450 monooxygenase calE (517 aa).

N-linked (GlcNAc...) asparagine glycosylation is present at N8. The helical transmembrane segment at 14 to 34 (SLMHHYILIAILVASIIAMVV) threads the bilayer. Residue C458 coordinates heme.

It belongs to the cytochrome P450 family. It depends on heme as a cofactor.

It is found in the membrane. The protein operates within secondary metabolite biosynthesis. Its function is as follows. Cytochrome P450 monooxygenase; part of the gene cluster that mediates the biosynthesis of calbistrin A and related compounds. Calbistrin A is a secondary metabolite with an interesting structure that was recently found to have bioactivity against leukemia cells. It consists of two polyketides linked by an ester bond: a bicyclic decalin containing polyketide and a linear 12 carbon dioic acid structure. The polyketide synthase calA is probably responsible for forming the decalin moiety. Because calA lacks a designated enoylreductase (ER) domain, the required activity is provided by the trans-enoyl reductase calK. Following release from the PKS, calF then probably catalyzes the oxidation and the subsequent Diels Alder cycloisomerization that lead to the formation of the decalin moiety. The decalin polyketide backbone includes two C-methyl groups, at C7 and C11 in backbone, of which the C7 position is probably methylated by the methyltransferase domain of calA. A candidate for adding the methyl group at C11, if not done by CalA, is the cluster methyltransferase calH. Several additional tailoring enzymes within the cluster could be involved in the modification of the decalin polyketide product. Those include the 3 cytochrome P450 monooxygenases CalE, CalG and CalL, of which one might be responsible for the introduction of the extra hydroxyl group attached to the backbone of the decalin moiety, at position C9 in the backbone, that allows for attachment of the linear moiety. One tailoring enzyme activity that is expected to be involved in biosynthesis of calbistrin is an acyltransferase for connecting the two polyketide synthase products, and which could be performed by the cluster acyltransferase calJ. The enzyme responsible for the biosynthesis of the linear moiety, probably a second PKS, has not been identified yet. The sequence is that of Cytochrome P450 monooxygenase calE from Penicillium decumbens.